Here is a 163-residue protein sequence, read N- to C-terminus: Sperm surface protein Sp17 (163 aa).

2 disordered regions span residues 57-115 (PAEW…EKEE) and 129-163 (VARE…THEK). Basic and acidic residues-rich tracts occupy residues 62–98 (SKVE…KEEE) and 129–139 (VAREEVKKMKT). The IQ domain occupies 114–143 (EEVAAVKIQAAFRGHVAREEVKKMKTDSLQ). Residues 153-163 (DTGFTSRTHEK) are compositionally biased toward polar residues.

Homodimer. May interact with ROPN1. As to expression, testis- and sperm-specific.

It localises to the membrane. In terms of biological role, sperm surface zona pellucida binding protein. Helps to bind spermatozoa to the zona pellucida with high affinity. Might function in binding zona pellucida and carbohydrates. In Papio hamadryas (Hamadryas baboon), this protein is Sperm surface protein Sp17 (SPA17).